Reading from the N-terminus, the 126-residue chain is Large ribosomal subunit protein mL52 (126 aa).

Residues 1–28 (MLKITKICLASSATSTAQRSIALTAPRA) constitute a mitochondrion transit peptide.

Belongs to the mitochondrion-specific ribosomal protein mL52 family. As to quaternary structure, component of the mitochondrial ribosome large subunit (39S) which comprises a 16S rRNA and about 50 distinct proteins.

The protein localises to the mitochondrion. This Drosophila melanogaster (Fruit fly) protein is Large ribosomal subunit protein mL52 (mRpL52).